The following is a 259-amino-acid chain: MARILITGSTDGFGFEAARQLIERKHQVYLHARNQERADEVKTKLPGAAGVLIADLTTVAETRKLADEANAIGTFDAVILNAGLLYGPFRKSDLGVPASVFVNLVSPYIFAALLNPPKRLIFIASVLHHEADTSLKDIFWLERGEKEWKDFPAYCDAKFHVVLLVNAIARRFKDTSVIAVHPGYVPTKLAGQDAPGKMEDGIETYVMLAEGDYDTSLTGVYFDPKKERAQPHALTADLDKQEAVVKACEELTGIKLPSP.

Positions 37, 55, 81, 154, 158, 185, and 187 each coordinate NADP(+). The active-site Proton donor is the Tyr-154. The active-site Lowers pKa of active site Tyr is Lys-158.

The protein belongs to the short-chain dehydrogenases/reductases (SDR) family.

Its pathway is pigment biosynthesis. Short-chain dehydrogenase; part of the gene cluster that mediates the biosynthesis of the yellow pigment chrysogine. Pyruvic acid and anthranilic acid are likely substrates for the nonribosomal peptide synthetase chry1/NRPS14, with pyruvic acid adenylated by the first A domain and anthranilic acid by the second. If pyruvic acid and anthranilic acid are merged and released from chry1/NRPS14 by hydrolysis, a subsequent amidation would lead to 2-pyruvoylaminobenzamide. This process is probably catalyzed by the amidotransferase chry2 using glutamine as amino donor. The dehydrogenase chry5 that has a terminal berberine bridge domain for C-N cyclization could catalyze the cyclization of 2-pyruvoylaminobenzamide to yield acetyl-4(3H)-quinazolidinone. A final reduction of acetyl-4(3H)-quinazolidinone catalyzed by the oxidoreductase chry4 would result in chrysogine. In Gibberella zeae (strain ATCC MYA-4620 / CBS 123657 / FGSC 9075 / NRRL 31084 / PH-1) (Wheat head blight fungus), this protein is Short-chain dehydrogenase chry4.